We begin with the raw amino-acid sequence, 129 residues long: Cocaine- and amphetamine-regulated transcript protein (129 aa).

Positions 1–27 (MESSRLRLLPLLGAALLLLLPLLGARA) are cleaved as a signal peptide. Tyr-41 is modified (phosphotyrosine). Ser-48 is modified (phosphoserine). Cystine bridges form between Cys-95–Cys-113, Cys-101–Cys-121, and Cys-115–Cys-128.

Belongs to the CART family.

It is found in the secreted. In terms of biological role, satiety factor closely associated with the actions of leptin and neuropeptide y; this anorectic peptide inhibits both normal and starvation-induced feeding and completely blocks the feeding response induced by neuropeptide Y and regulated by leptin in the hypothalamus. The sequence is that of Cocaine- and amphetamine-regulated transcript protein (Cartpt) from Mus musculus (Mouse).